Reading from the N-terminus, the 461-residue chain is Probable carboxypeptidase MGYG_04702 (461 aa).

Positions 1-20 are cleaved as a signal peptide; it reads MQKTYLLALVSLLASSLVEA. N48 and N99 each carry an N-linked (GlcNAc...) asparagine glycan. D176 lines the Zn(2+) pocket. E208 (proton acceptor) is an active-site residue. E209 contacts Zn(2+). Residue N396 is glycosylated (N-linked (GlcNAc...) asparagine).

This sequence belongs to the peptidase M20A family. Zn(2+) serves as cofactor.

The protein localises to the secreted. This is Probable carboxypeptidase MGYG_04702 from Arthroderma gypseum (strain ATCC MYA-4604 / CBS 118893) (Microsporum gypseum).